The following is a 244-amino-acid chain: Probable transcriptional regulatory protein DMR_30850 (244 aa).

Belongs to the TACO1 family.

It localises to the cytoplasm. In Solidesulfovibrio magneticus (strain ATCC 700980 / DSM 13731 / RS-1) (Desulfovibrio magneticus), this protein is Probable transcriptional regulatory protein DMR_30850.